We begin with the raw amino-acid sequence, 158 residues long: uncharacterized protein (158 aa).

This is an uncharacterized protein from Methanocaldococcus jannaschii (strain ATCC 43067 / DSM 2661 / JAL-1 / JCM 10045 / NBRC 100440) (Methanococcus jannaschii).